The primary structure comprises 98 residues: Large ribosomal subunit protein uL23 (98 aa).

This sequence belongs to the universal ribosomal protein uL23 family. Part of the 50S ribosomal subunit. Contacts protein L29, and trigger factor when it is bound to the ribosome.

Its function is as follows. One of the early assembly proteins it binds 23S rRNA. One of the proteins that surrounds the polypeptide exit tunnel on the outside of the ribosome. Forms the main docking site for trigger factor binding to the ribosome. The sequence is that of Large ribosomal subunit protein uL23 from Herpetosiphon aurantiacus (strain ATCC 23779 / DSM 785 / 114-95).